Reading from the N-terminus, the 231-residue chain is Ribonuclease 3 (231 aa).

In terms of domain architecture, RNase III spans 1-134; that stretch reads MKTLEKKLAE…FLGALLLDAG (134 aa). Glu-47 is a binding site for Mg(2+). Residue Asp-51 is part of the active site. Asp-120 and Glu-123 together coordinate Mg(2+). Residue Glu-123 is part of the active site. The region spanning 160–229 is the DRBM domain; it reads DYKTALQELL…AKNALEKLQR (70 aa).

This sequence belongs to the ribonuclease III family. Homodimer. It depends on Mg(2+) as a cofactor.

The protein resides in the cytoplasm. It catalyses the reaction Endonucleolytic cleavage to 5'-phosphomonoester.. Digests double-stranded RNA. Involved in the processing of primary rRNA transcript to yield the immediate precursors to the large and small rRNAs (23S and 16S). Also processes some mRNAs, and tRNAs when they are encoded in the rRNA operon. Functionally, CRISPR (clustered regularly interspaced short palindromic repeat) is an adaptive immune system that provides protection against mobile genetic elements (viruses, transposable elements and conjugative plasmids). CRISPR clusters contain spacers, sequences complementary to antecedent mobile elements, and target invading nucleic acids. CRISPR clusters are transcribed and processed into CRISPR RNA (crRNA). In this organism endogenous ribonuclease 3 and Cas9 are required for correct coprocessing of pre-crRNA and the trans-encoded small RNA (tracrRNA). Cas9, crRNA and tracrRNA are required for cleavage of invading DNA. Complements pre-crRNA and tracrRNA coprocessing defects in an rnc deletion in S.pyogenes strain 370. This is Ribonuclease 3 from Streptococcus mutans serotype c (strain ATCC 700610 / UA159).